A 161-amino-acid chain; its full sequence is Phosphopantetheine adenylyltransferase (161 aa).

It belongs to the eukaryotic CoaD family.

It is found in the cytoplasm. It catalyses the reaction (R)-4'-phosphopantetheine + ATP + H(+) = 3'-dephospho-CoA + diphosphate. It participates in cofactor biosynthesis; coenzyme A biosynthesis. Reversibly transfers an adenylyl group from ATP to 4'-phosphopantetheine, yielding dephospho-CoA (dPCoA) and pyrophosphate. This Methanosarcina barkeri (strain Fusaro / DSM 804) protein is Phosphopantetheine adenylyltransferase.